Here is a 423-residue protein sequence, read N- to C-terminus: F-box/LRR-repeat protein 2 (423 aa).

An F-box domain is found at 9 to 55 (GLINKKLPKELLLRIFSFLDIVTLCRCAQISKAWNILALDGSNWQRV). LRR repeat units follow at residues 61–87 (QTDV…SLRG), 88–113 (CIGV…NLNG), 114–139 (CTKI…DLTS), 140–165 (CVSV…NLSW), 166–191 (CDQI…LLRG), 192–217 (CTQL…NLQS), 218–243 (CSRI…CLSG), 244–269 (CSNL…EAAR), 270–295 (CSHL…DLEE), 296–321 (CVLI…SLSH), 322–350 (CELI…ELDN), 351–375 (CLLV…ELYD), and 376–401 (CQQV…AYFA). Positions 80–90 (LRKLSLRGCIG) are interaction with Calmodulin. Residue Lys-201 forms a Glycyl lysine isopeptide (Lys-Gly) (interchain with G-Cter in ubiquitin) linkage. Residue Thr-404 is modified to Phosphothreonine; by GSK3-beta. The S-geranylgeranyl cysteine moiety is linked to residue Cys-420. Residues 420 to 423 (CVIL) carry the CAAX motif motif.

Part of the SCF (SKP1-CUL1-F-box) E3 ubiquitin-protein ligase complex SCF(FBXL2) composed of CUL1, SKP1, RBX1 and FBXL2. Interacts with calmodulin; may antagonize substrate ubiquitination by SCF(FBXL2). May interact with PIK3R1. Interacts with PTPN13. Phosphorylated by GSK-beta (GSK3B), promoting recognition by FBXO3, leading to its ubiquitination by the SCF(FBXO3) complex. Post-translationally, ubiquitinated at Lys-201 by the SCF(FBXO3) complex in response to lipopolysaccharide (LPS), leading to its degradation by the proteasome.

It localises to the membrane. The protein operates within protein modification; protein ubiquitination. Functionally, calcium-activated substrate recognition component of the SCF (SKP1-cullin-F-box protein) E3 ubiquitin-protein ligase complex, SCF(FBXL2), which mediates the ubiquitination and subsequent proteasomal degradation of target proteins. Unlike many F-box proteins, FBXL2 does not seem to target phosphodegron within its substrates but rather calmodulin-binding motifs and is thereby antagonized by calmodulin. This is the case for the cyclins CCND2 and CCND3 which polyubiquitination and subsequent degradation are inhibited by calmodulin. Through CCND2 and CCND3 degradation induces cell-cycle arrest in G(0). SCF(FBXL2) also mediates PIK3R2 ubiquitination and proteasomal degradation thereby regulating phosphatidylinositol 3-kinase signaling and autophagy. PCYT1A monoubiquitination by SCF(FBXL2) and subsequent degradation regulates synthesis of phosphatidylcholine, which is utilized for formation of membranes and of pulmonary surfactant. The SCF(FBXL2) complex acts as a regulator of inflammation by mediating ubiquitination and degradation of TRAF proteins (TRAF1, TRAF2, TRAF3, TRAF4, TRAF5 and TRAF6). The SCF(FBXL2) complex acts as a negative regulator of the NLRP3 inflammasome by mediating ubiquitination and degradation of NLRP3. In Mus musculus (Mouse), this protein is F-box/LRR-repeat protein 2.